The following is a 488-amino-acid chain: Ribulose bisphosphate carboxylase large chain (488 aa).

Substrate is bound by residues Asn-127 and Thr-177. The active-site Proton acceptor is Lys-179. Substrate is bound at residue Lys-181. Residues Lys-205, Asp-207, and Glu-208 each contribute to the Mg(2+) site. N6-carboxylysine is present on Lys-205. His-297 functions as the Proton acceptor in the catalytic mechanism. Arg-298, His-330, and Ser-382 together coordinate substrate.

Belongs to the RuBisCO large chain family. Type I subfamily. In terms of assembly, heterohexadecamer of 8 large chains and 8 small chains. The cofactor is Mg(2+).

Its subcellular location is the plastid. It localises to the chloroplast. It carries out the reaction 2 (2R)-3-phosphoglycerate + 2 H(+) = D-ribulose 1,5-bisphosphate + CO2 + H2O. The enzyme catalyses D-ribulose 1,5-bisphosphate + O2 = 2-phosphoglycolate + (2R)-3-phosphoglycerate + 2 H(+). In terms of biological role, ruBisCO catalyzes two reactions: the carboxylation of D-ribulose 1,5-bisphosphate, the primary event in carbon dioxide fixation, as well as the oxidative fragmentation of the pentose substrate in the photorespiration process. Both reactions occur simultaneously and in competition at the same active site. The protein is Ribulose bisphosphate carboxylase large chain of Pylaiella littoralis (Seaweed).